Here is a 278-residue protein sequence, read N- to C-terminus: HTH-type transcriptional activator RhaS (278 aa).

Positions 174-272 (NLLLAWLEDH…NWSPRDIRQG (99 aa)) constitute an HTH araC/xylS-type domain. DNA-binding regions (H-T-H motif) lie at residues 191 to 212 (DAVADQFSLSLRTLHRQLKQQT) and 239 to 262 (VTDIAYRCGFSDSNHFSTLFHREF).

As to quaternary structure, binds DNA as a dimer.

It localises to the cytoplasm. Its function is as follows. Activates expression of the rhaBAD and rhaT operons. This is HTH-type transcriptional activator RhaS from Shigella boydii serotype 18 (strain CDC 3083-94 / BS512).